The chain runs to 276 residues: Light-independent protochlorophyllide reductase iron-sulfur ATP-binding protein (276 aa).

ATP contacts are provided by residues glycine 12–threonine 17 and lysine 41. Serine 16 serves as a coordination point for Mg(2+). [4Fe-4S] cluster is bound by residues cysteine 97 and cysteine 131. Position 182 to 183 (asparagine 182 to arginine 183) interacts with ATP.

This sequence belongs to the NifH/BchL/ChlL family. As to quaternary structure, homodimer. Protochlorophyllide reductase is composed of three subunits; BchL, BchN and BchB. Requires [4Fe-4S] cluster as cofactor.

It carries out the reaction chlorophyllide a + oxidized 2[4Fe-4S]-[ferredoxin] + 2 ADP + 2 phosphate = protochlorophyllide a + reduced 2[4Fe-4S]-[ferredoxin] + 2 ATP + 2 H2O. Its pathway is porphyrin-containing compound metabolism; bacteriochlorophyll biosynthesis (light-independent). Component of the dark-operative protochlorophyllide reductase (DPOR) that uses Mg-ATP and reduced ferredoxin to reduce ring D of protochlorophyllide (Pchlide) to form chlorophyllide a (Chlide). This reaction is light-independent. The L component serves as a unique electron donor to the NB-component of the complex, and binds Mg-ATP. The sequence is that of Light-independent protochlorophyllide reductase iron-sulfur ATP-binding protein from Chlorobaculum tepidum (strain ATCC 49652 / DSM 12025 / NBRC 103806 / TLS) (Chlorobium tepidum).